The sequence spans 492 residues: Stomatal closure-related actin-binding protein 2 (492 aa).

Residues 112-132 (LKKLRDALETMRGRMDGRNRE) adopt a coiled-coil conformation.

Belongs to the SCAB family. As to expression, expressed in roots, stems, leaves, siliques and flowers.

The protein resides in the cytoplasm. The protein localises to the cytoskeleton. Probable plant-specific actin binding protein that bundles and stabilizes microfilaments (MFs). The polypeptide is Stomatal closure-related actin-binding protein 2 (Arabidopsis thaliana (Mouse-ear cress)).